Here is a 560-residue protein sequence, read N- to C-terminus: DNA-directed primase/polymerase protein (560 aa).

Residues 1-22 adopt a coiled-coil conformation; it reads MNRKWEAKLKQIEERASHYERK. Substrate-binding positions include Arg76, 114-116, and 165-169; these read DLE and KFSRH. Mn(2+) contacts are provided by Asp114 and Glu116. Residues 203–223 are disordered; sequence EDDDSAPETTGHGFPHFSEAP. Residue Ser255 is modified to Phosphoserine. Residues 288–291 and Lys297 each bind substrate; that span reads RNFR. Zn(2+)-binding residues include Cys419, His426, Cys446, and Cys451. Residues 419–452 carry the Zinc knuckle motif motif; it reads CENIGRAHKSNNIMILVDLKNEVWYQKCHDPVCK. Residues 480–507 are disordered; sequence TTDEADETRSNETQNPHKPSPSRLSTGA. The interaction with RPA1 stretch occupies residues 481 to 560; the sequence is TDEADETRSN…DELIIEVLQE (80 aa). The segment covering 490-507 has biased composition (polar residues); the sequence is NETQNPHKPSPSRLSTGA. 2 consecutive short sequence motifs (RPA1-binding motif) follow at residues 513–527 and 548–556; these read WDNG…EATE and EIPDELIIE.

Belongs to the eukaryotic-type primase small subunit family. In terms of assembly, interacts with RPA1; leading to recruitment to chromatin and stimulate DNA primase activity. Interacts with SSBP1. Interacts with POLDIP2; leading to enhance DNA polymerase activity. The cofactor is Mn(2+).

The protein localises to the nucleus. The protein resides in the mitochondrion matrix. It localises to the chromosome. It carries out the reaction ssDNA + n NTP = ssDNA/pppN(pN)n-1 hybrid + (n-1) diphosphate.. The catalysed reaction is DNA(n) + a 2'-deoxyribonucleoside 5'-triphosphate = DNA(n+1) + diphosphate. In terms of biological role, DNA primase and DNA polymerase required to tolerate replication-stalling lesions by bypassing them. Required to facilitate mitochondrial and nuclear replication fork progression by initiating de novo DNA synthesis using dNTPs and acting as an error-prone DNA polymerase able to bypass certain DNA lesions. Shows a high capacity to tolerate DNA damage lesions such as 8oxoG and abasic sites in DNA. Provides different translesion synthesis alternatives when DNA replication is stalled: able to synthesize DNA primers downstream of lesions, such as ultraviolet (UV) lesions, R-loops and G-quadruplexes, to allow DNA replication to continue. Can also realign primers ahead of 'unreadable lesions' such as abasic sites and 6-4 photoproduct (6-4 pyrimidine-pyrimidinone), thereby skipping the lesion. Repriming avoids fork degradation while leading to accumulation of internal ssDNA gaps behind the forks. Also able to incorporate nucleotides opposite DNA lesions such as 8oxoG, like a regular translesion synthesis DNA polymerase. Also required for reinitiating stalled forks after UV damage during nuclear DNA replication. Required for mitochondrial DNA (mtDNA) synthesis and replication, by reinitiating synthesis after UV damage or in the presence of chain-terminating nucleotides. Prevents APOBEC family-mediated DNA mutagenesis by repriming downstream of abasic site to prohibit error-prone translesion synthesis. Has non-overlapping function with POLH. In addition to its role in DNA damage response, also required to maintain efficient nuclear and mitochondrial DNA replication in unperturbed cells. This is DNA-directed primase/polymerase protein from Homo sapiens (Human).